The chain runs to 431 residues: 3-phosphoshikimate 1-carboxyvinyltransferase (431 aa).

3-phosphoshikimate-binding residues include K20, S21, and R25. K20 is a binding site for phosphoenolpyruvate. The phosphoenolpyruvate site is built by G91 and R119. 4 residues coordinate 3-phosphoshikimate: S164, Q166, D317, and K344. Position 166 (Q166) interacts with phosphoenolpyruvate. D317 functions as the Proton acceptor in the catalytic mechanism. The phosphoenolpyruvate site is built by R348 and R390.

Belongs to the EPSP synthase family. Monomer.

It localises to the cytoplasm. It catalyses the reaction 3-phosphoshikimate + phosphoenolpyruvate = 5-O-(1-carboxyvinyl)-3-phosphoshikimate + phosphate. The protein operates within metabolic intermediate biosynthesis; chorismate biosynthesis; chorismate from D-erythrose 4-phosphate and phosphoenolpyruvate: step 6/7. Its function is as follows. Catalyzes the transfer of the enolpyruvyl moiety of phosphoenolpyruvate (PEP) to the 5-hydroxyl of shikimate-3-phosphate (S3P) to produce enolpyruvyl shikimate-3-phosphate and inorganic phosphate. This chain is 3-phosphoshikimate 1-carboxyvinyltransferase, found in Aquifex aeolicus (strain VF5).